The following is a 162-amino-acid chain: CASP-like protein 0U1 (162 aa).

Residues 1-11 (MAAVEAAKTPR) are Cytoplasmic-facing. The chain crosses the membrane as a helical span at residues 12–32 (FILLIIEWVFALVAFAVMGHY). Over 33 to 43 (LFDDRRSSFEY) the chain is Extracellular. A helical transmembrane segment spans residues 44 to 64 (LTAICILVWLVVMIYMVILCC). Over 65–69 (GRALP) the chain is Cytoplasmic. A helical transmembrane segment spans residues 70–90 (PLIEAAIFLLFAILVFIAFLV). The Extracellular portion of the chain corresponds to 91–123 (TAVKCNNSETIVIAGQTISRKVCEGESEPKAAA). N-linked (GlcNAc...) asparagine glycosylation is present at Asn96. The helical transmembrane segment at 124–144 (AFAFLLGLLLAGSSVLGCIAF) threads the bilayer. The Cytoplasmic segment spans residues 145–162 (RRPSAPPLSSFQNPTSSV).

The protein belongs to the Casparian strip membrane proteins (CASP) family. As to quaternary structure, homodimer and heterodimers.

It localises to the cell membrane. This Chlorokybus atmophyticus (Soil alga) protein is CASP-like protein 0U1.